The chain runs to 252 residues: Adenosylcobinamide-GDP ribazoletransferase (252 aa).

7 helical membrane-spanning segments follow: residues 35-55 (AMLPLIGLIVGCIQWVVFYIL), 58-78 (IFPANITAIFIILVGMVLIGG), 113-133 (FAVLALIFDILIKYSALSFII), 139-159 (YAIIITPIMSRCTLVFLFLIG), 170-190 (LFIENVSVKEFIISFIFMIVP), 192-212 (VLLIGYKYSVIIIVVSFIITL), and 231-251 (GANNEIVEMFTMLVFVALLYI).

The protein belongs to the CobS family. Requires Mg(2+) as cofactor.

The protein localises to the cell membrane. The catalysed reaction is alpha-ribazole + adenosylcob(III)inamide-GDP = adenosylcob(III)alamin + GMP + H(+). It carries out the reaction alpha-ribazole 5'-phosphate + adenosylcob(III)inamide-GDP = adenosylcob(III)alamin 5'-phosphate + GMP + H(+). The protein operates within cofactor biosynthesis; adenosylcobalamin biosynthesis; adenosylcobalamin from cob(II)yrinate a,c-diamide: step 7/7. Joins adenosylcobinamide-GDP and alpha-ribazole to generate adenosylcobalamin (Ado-cobalamin). Also synthesizes adenosylcobalamin 5'-phosphate from adenosylcobinamide-GDP and alpha-ribazole 5'-phosphate. The polypeptide is Adenosylcobinamide-GDP ribazoletransferase (Clostridium tetani (strain Massachusetts / E88)).